A 1241-amino-acid polypeptide reads, in one-letter code: ATP-dependent helicase/nuclease subunit A (1241 aa).

Residues S12–R485 enclose the UvrD-like helicase ATP-binding domain. Residue A33 to T40 participates in ATP binding. One can recognise a UvrD-like helicase C-terminal domain in the interval G505–G805.

Belongs to the helicase family. AddA subfamily. In terms of assembly, heterodimer of AddA and AddB/RexB. Requires Mg(2+) as cofactor.

It catalyses the reaction Couples ATP hydrolysis with the unwinding of duplex DNA by translocating in the 3'-5' direction.. The enzyme catalyses ATP + H2O = ADP + phosphate + H(+). The heterodimer acts as both an ATP-dependent DNA helicase and an ATP-dependent, dual-direction single-stranded exonuclease. Recognizes the chi site generating a DNA molecule suitable for the initiation of homologous recombination. The AddA nuclease domain is required for chi fragment generation; this subunit has the helicase and 3' -&gt; 5' nuclease activities. This chain is ATP-dependent helicase/nuclease subunit A, found in Bacillus cereus (strain ATCC 14579 / DSM 31 / CCUG 7414 / JCM 2152 / NBRC 15305 / NCIMB 9373 / NCTC 2599 / NRRL B-3711).